Here is a 281-residue protein sequence, read N- to C-terminus: 2-dehydro-3-deoxyphosphooctonate aldolase (281 aa).

The protein belongs to the KdsA family.

Its subcellular location is the cytoplasm. The enzyme catalyses D-arabinose 5-phosphate + phosphoenolpyruvate + H2O = 3-deoxy-alpha-D-manno-2-octulosonate-8-phosphate + phosphate. The protein operates within carbohydrate biosynthesis; 3-deoxy-D-manno-octulosonate biosynthesis; 3-deoxy-D-manno-octulosonate from D-ribulose 5-phosphate: step 2/3. It participates in bacterial outer membrane biogenesis; lipopolysaccharide biosynthesis. The polypeptide is 2-dehydro-3-deoxyphosphooctonate aldolase (Pseudomonas fluorescens (strain ATCC BAA-477 / NRRL B-23932 / Pf-5)).